Consider the following 181-residue polypeptide: ATP-dependent protease subunit HslV (181 aa).

Residue threonine 9 is part of the active site. Residues alanine 166, cysteine 169, and threonine 172 each coordinate Na(+).

This sequence belongs to the peptidase T1B family. HslV subfamily. A double ring-shaped homohexamer of HslV is capped on each side by a ring-shaped HslU homohexamer. The assembly of the HslU/HslV complex is dependent on binding of ATP.

It is found in the cytoplasm. It carries out the reaction ATP-dependent cleavage of peptide bonds with broad specificity.. Allosterically activated by HslU binding. In terms of biological role, protease subunit of a proteasome-like degradation complex believed to be a general protein degrading machinery. In Staphylococcus aureus (strain JH1), this protein is ATP-dependent protease subunit HslV.